The following is a 150-amino-acid chain: T-complex protein 1 subunit beta (150 aa).

Aspartate 35 provides a ligand contact to Mg(2+). Residues glycine 36, threonine 37, threonine 38, and serine 39 each contribute to the ADP site. The ATP site is built by glycine 36, threonine 37, and threonine 38.

It belongs to the TCP-1 chaperonin family. Component of the chaperonin-containing T-complex (TRiC), a hexadecamer composed of two identical back-to-back stacked rings enclosing a protein folding chamber. Each ring is made up of eight different subunits: TCP1/CCT1, CCT2, CCT3, CCT4, CCT5, CCT6A/CCT6, CCT7, CCT8. Interacts with PACRG. Interacts with FLCN. Interacts with DLEC1. Interacts with SVEP1.

Its subcellular location is the cytoplasm. The catalysed reaction is ATP + H2O = ADP + phosphate + H(+). Component of the chaperonin-containing T-complex (TRiC), a molecular chaperone complex that assists the folding of actin, tubulin and other proteins upon ATP hydrolysis. The TRiC complex mediates the folding of WRAP53/TCAB1, thereby regulating telomere maintenance. As part of the TRiC complex may play a role in the assembly of BBSome, a complex involved in ciliogenesis regulating transports vesicles to the cilia. This Mesocricetus auratus (Golden hamster) protein is T-complex protein 1 subunit beta.